A 177-amino-acid chain; its full sequence is Large ribosomal subunit protein uL6 (177 aa).

This sequence belongs to the universal ribosomal protein uL6 family. As to quaternary structure, part of the 50S ribosomal subunit.

Its function is as follows. This protein binds to the 23S rRNA, and is important in its secondary structure. It is located near the subunit interface in the base of the L7/L12 stalk, and near the tRNA binding site of the peptidyltransferase center. This is Large ribosomal subunit protein uL6 from Pseudomonas paraeruginosa (strain DSM 24068 / PA7) (Pseudomonas aeruginosa (strain PA7)).